A 301-amino-acid chain; its full sequence is Aldose reductase (301 aa).

11–20 (GKEIPTVGLG) provides a ligand contact to NADP(+). The active-site Proton donor is the tyrosine 51. Histidine 111 provides a ligand contact to substrate. 209–266 (SSLGSAPGSSAKVRDDKTIKAIAKKYGCAPSQIILSYITAQGICVIPKSRSKEHLREN) is a binding site for NADP(+).

Belongs to the aldo/keto reductase family.

The protein resides in the cytoplasm. It catalyses the reaction an alditol + NAD(+) = an aldose + NADH + H(+). It carries out the reaction an alditol + NADP(+) = an aldose + NADPH + H(+). Functionally, catalyzes the NADPH-dependent reduction of a wide variety of carbonyl-containing compounds to their corresponding alcohols with a broad range of catalytic efficiencies. The polypeptide is Aldose reductase (Encephalitozoon cuniculi (strain GB-M1) (Microsporidian parasite)).